A 692-amino-acid polypeptide reads, in one-letter code: Elongation factor G (692 aa).

In terms of domain architecture, tr-type G spans 8–282 (AKTRNIGIMA…AVIAYLPSPL (275 aa)). Residues 17–24 (AHVDAGKT), 81–85 (DTPGH), and 135–138 (NKMD) each bind GTP.

It belongs to the TRAFAC class translation factor GTPase superfamily. Classic translation factor GTPase family. EF-G/EF-2 subfamily.

Its subcellular location is the cytoplasm. Functionally, catalyzes the GTP-dependent ribosomal translocation step during translation elongation. During this step, the ribosome changes from the pre-translocational (PRE) to the post-translocational (POST) state as the newly formed A-site-bound peptidyl-tRNA and P-site-bound deacylated tRNA move to the P and E sites, respectively. Catalyzes the coordinated movement of the two tRNA molecules, the mRNA and conformational changes in the ribosome. The chain is Elongation factor G from Streptococcus equi subsp. zooepidemicus (strain MGCS10565).